The sequence spans 138 residues: ATP synthase epsilon chain (138 aa).

This sequence belongs to the ATPase epsilon chain family. As to quaternary structure, F-type ATPases have 2 components, CF(1) - the catalytic core - and CF(0) - the membrane proton channel. CF(1) has five subunits: alpha(3), beta(3), gamma(1), delta(1), epsilon(1). CF(0) has three main subunits: a, b and c.

The protein resides in the cell inner membrane. In terms of biological role, produces ATP from ADP in the presence of a proton gradient across the membrane. This is ATP synthase epsilon chain from Trichlorobacter lovleyi (strain ATCC BAA-1151 / DSM 17278 / SZ) (Geobacter lovleyi).